Here is a 373-residue protein sequence, read N- to C-terminus: Anhydro-N-acetylmuramic acid kinase (373 aa).

Position 12–19 (G12–D19) interacts with ATP.

It belongs to the anhydro-N-acetylmuramic acid kinase family.

It catalyses the reaction 1,6-anhydro-N-acetyl-beta-muramate + ATP + H2O = N-acetyl-D-muramate 6-phosphate + ADP + H(+). The protein operates within amino-sugar metabolism; 1,6-anhydro-N-acetylmuramate degradation. It functions in the pathway cell wall biogenesis; peptidoglycan recycling. In terms of biological role, catalyzes the specific phosphorylation of 1,6-anhydro-N-acetylmuramic acid (anhMurNAc) with the simultaneous cleavage of the 1,6-anhydro ring, generating MurNAc-6-P. Is required for the utilization of anhMurNAc either imported from the medium or derived from its own cell wall murein, and thus plays a role in cell wall recycling. The sequence is that of Anhydro-N-acetylmuramic acid kinase from Salmonella gallinarum (strain 287/91 / NCTC 13346).